A 162-amino-acid polypeptide reads, in one-letter code: NADH-quinone oxidoreductase subunit I (162 aa).

4Fe-4S ferredoxin-type domains follow at residues 53–83 (LRRYPNGEERCIACKLCEAVCPALAITIDSA) and 93–122 (TRYDIDLFKCIFCGFCEESCPVDSIVETHI). [4Fe-4S] cluster-binding residues include C63, C66, C69, C73, C102, C105, C108, and C112.

This sequence belongs to the complex I 23 kDa subunit family. In terms of assembly, NDH-1 is composed of 14 different subunits. Subunits NuoA, H, J, K, L, M, N constitute the membrane sector of the complex. Requires [4Fe-4S] cluster as cofactor.

The protein localises to the cell inner membrane. It catalyses the reaction a quinone + NADH + 5 H(+)(in) = a quinol + NAD(+) + 4 H(+)(out). In terms of biological role, NDH-1 shuttles electrons from NADH, via FMN and iron-sulfur (Fe-S) centers, to quinones in the respiratory chain. The immediate electron acceptor for the enzyme in this species is believed to be ubiquinone. Couples the redox reaction to proton translocation (for every two electrons transferred, four hydrogen ions are translocated across the cytoplasmic membrane), and thus conserves the redox energy in a proton gradient. The chain is NADH-quinone oxidoreductase subunit I from Xanthomonas axonopodis pv. citri (strain 306).